Here is a 386-residue protein sequence, read N- to C-terminus: Histone-lysine N-methyltransferase SETD7 (386 aa).

The segment covering 1–12 (MDSSDDEIACDE) has biased composition (acidic residues). Residues 1–21 (MDSSDDEIACDEGDYKGAKDD) are disordered. MORN repeat units follow at residues 15 to 38 (YKGAKDDNDLPHGLGKVKFSSGDE), 39 to 61 (FIGAFEHGIKCGPGKFHFFDDST), 62 to 84 (LEGNYVDGELHGIGIYTNDDGSI), and 109 to 131 (FRGQYSEGVRCGLCFYYFPDGGS). The region spanning 222–344 (ELVYAAPSKI…EGDELTVHYT (123 aa)) is the SET domain. S-adenosyl-L-methionine is bound by residues 234–236 (AGE), Asn-304, and His-305.

The protein belongs to the class V-like SAM-binding methyltransferase superfamily. Histone-lysine methyltransferase family. SET7 subfamily.

The protein localises to the nucleus. It is found in the chromosome. The catalysed reaction is L-lysyl(4)-[histone H3] + S-adenosyl-L-methionine = N(6)-methyl-L-lysyl(4)-[histone H3] + S-adenosyl-L-homocysteine + H(+). It carries out the reaction L-lysyl-[protein] + S-adenosyl-L-methionine = N(6)-methyl-L-lysyl-[protein] + S-adenosyl-L-homocysteine + H(+). Functionally, histone methyltransferase that specifically monomethylates 'Lys-4' of histone H3. H3 'Lys-4' methylation represents a specific tag for epigenetic transcriptional activation. Plays a central role in the transcriptional activation of genes. Also has methyltransferase activity toward non-histone proteins. This is Histone-lysine N-methyltransferase SETD7 (setd7) from Halocynthia roretzi (Sea squirt).